Reading from the N-terminus, the 507-residue chain is ATP synthase subunit alpha (507 aa).

168–175 (GDRKTGKT) contacts ATP.

It belongs to the ATPase alpha/beta chains family. In terms of assembly, F-type ATPases have 2 components, CF(1) - the catalytic core - and CF(0) - the membrane proton channel. CF(1) has five subunits: alpha(3), beta(3), gamma(1), delta(1), epsilon(1). CF(0) has three main subunits: a(1), b(2) and c(9-12). The alpha and beta chains form an alternating ring which encloses part of the gamma chain. CF(1) is attached to CF(0) by a central stalk formed by the gamma and epsilon chains, while a peripheral stalk is formed by the delta and b chains.

Its subcellular location is the cell inner membrane. It catalyses the reaction ATP + H2O + 4 H(+)(in) = ADP + phosphate + 5 H(+)(out). Functionally, produces ATP from ADP in the presence of a proton gradient across the membrane. The alpha chain is a regulatory subunit. The polypeptide is ATP synthase subunit alpha (Ehrlichia ruminantium (strain Gardel)).